The chain runs to 548 residues: Pentatricopeptide repeat-containing protein At1g62680, mitochondrial (548 aa).

The N-terminal 43 residues, 1–43 (MQRSIAMTAKRFLHRNLLENGKPRTASSPSFSHCSSCRCWVRA), are a transit peptide targeting the mitochondrion. 12 PPR repeats span residues 84-118 (SIVD…GIRN), 119-153 (DLYT…GYEP), 154-188 (DRVT…GYKP), 189-223 (DIVA…GIRP), 224-258 (NVVT…KITP), 259-293 (NVIT…SIDP), 294-328 (DIVT…GCLA), 329-363 (DVVS…GLVS), 364-398 (NTVT…GISP), 399-433 (DIWT…EMDL), 434-468 (DIVT…GLKP), and 469-503 (DIVT…GLMK).

It belongs to the PPR family. P subfamily.

It localises to the mitochondrion. The polypeptide is Pentatricopeptide repeat-containing protein At1g62680, mitochondrial (Arabidopsis thaliana (Mouse-ear cress)).